The primary structure comprises 146 residues: Hemoglobin subunit beta (146 aa).

V1 carries the N-acetylvaline modification. Residues 2-146 (HLTGEEKAAV…VANALAHKYH (145 aa)) form the Globin domain. T12 carries the post-translational modification Phosphothreonine. Residue S44 is modified to Phosphoserine. K59 is modified (N6-acetyllysine). H63 contributes to the heme b binding site. Position 82 is an N6-acetyllysine (K82). H92 serves as a coordination point for heme b. C93 bears the S-nitrosocysteine mark. N6-acetyllysine is present on K144.

The protein belongs to the globin family. As to quaternary structure, heterotetramer of two alpha chains and two beta chains. In terms of tissue distribution, red blood cells.

In terms of biological role, involved in oxygen transport from the lung to the various peripheral tissues. The polypeptide is Hemoglobin subunit beta (HBB) (Mustela putorius furo (European domestic ferret)).